Reading from the N-terminus, the 224-residue chain is Small ribosomal subunit protein eS1 (224 aa).

The protein belongs to the eukaryotic ribosomal protein eS1 family.

This Methanococcus maripaludis (strain C7 / ATCC BAA-1331) protein is Small ribosomal subunit protein eS1.